Here is a 52-residue protein sequence, read N- to C-terminus: uncharacterized protein (52 aa).

The segment at 24-52 is disordered; it reads LRENPSKNVRTIPDAGDENSSFGHARVIA.

This is an uncharacterized protein from Treponema pallidum (strain Nichols).